A 311-amino-acid chain; its full sequence is Cytosolic Fe-S cluster assembly factor Nubp1 homolog (311 aa).

Positions 1-20 (MQAPPPEHCPGVESENAGKG) are disordered. Positions 9, 23, 26, and 32 each coordinate [4Fe-4S] cluster. ATP is bound at residue 63–70 (GKGGVGKS). Positions 240 and 243 each coordinate [4Fe-4S] cluster.

Belongs to the Mrp/NBP35 ATP-binding proteins family. NUBP1/NBP35 subfamily. As to quaternary structure, heterotetramer of 2 Nubp1 and 2 Nubp2 chains. It depends on [4Fe-4S] cluster as a cofactor.

It is found in the cytoplasm. Functionally, component of the cytosolic iron-sulfur (Fe/S) protein assembly (CIA) machinery. Required for maturation of extramitochondrial Fe-S proteins. The Nubp1-Nubp2 heterotetramer forms a Fe-S scaffold complex, mediating the de novo assembly of an Fe-S cluster and its transfer to target apoproteins. In Drosophila simulans (Fruit fly), this protein is Cytosolic Fe-S cluster assembly factor Nubp1 homolog.